A 520-amino-acid chain; its full sequence is Aspartate-proton symporter (520 aa).

14 helical membrane passes run 13-33 (LFDL…LFAV), 49-69 (ILGG…GAAL), 85-105 (HLVG…LISI), 130-150 (TISG…LNYW), 161-181 (IISI…IFHF), 201-221 (AAIS…IVSV), 232-252 (IPIA…VLQV), 281-301 (IAVM…AILS), 345-365 (WLSF…NALV), 366-386 (NVCS…SAAL), 402-422 (MSII…WSGW), 425-445 (VSWL…FSKY), 460-480 (AWWL…GSFG), and 482-502 (GLGI…SLAI).

It belongs to the amino acid-polyamine-organocation (APC) superfamily. AGT (TC 2.A.3.11) family.

It is found in the cell membrane. Its function is as follows. Uptake of L-aspartate with the concomitant import of a proton. Can also transport aspartate hydroxamate and L-glutamate with lower affinity and efficiency. In Bacillus subtilis (strain 168), this protein is Aspartate-proton symporter (yveA).